The sequence spans 441 residues: Mitochondrial distribution and morphology protein 12 (441 aa).

Residues 1-441 (MSIDIDWERA…VYPSFWTFLV (441 aa)) form the SMP-LTD domain. 2 disordered regions span residues 68–89 (DFYEDGDEDLSVSSEEQSPMRE) and 183–289 (RAVT…RMRE). 2 stretches are compositionally biased toward polar residues: residues 226 to 245 (SRPSTANTGNTLLSRGSVST) and 253 to 263 (PSQTLLANNPG).

This sequence belongs to the MDM12 family. Component of the ER-mitochondria encounter structure (ERMES) or MDM complex, composed of MMM1, MDM10, MDM12 and MDM34. An MMM1 homodimer associates with one molecule of MDM12 on each side in a pairwise head-to-tail manner, and the SMP-LTD domains of MMM1 and MDM12 generate a continuous hydrophobic tunnel for phospholipid trafficking.

The protein resides in the mitochondrion outer membrane. Its subcellular location is the endoplasmic reticulum membrane. In terms of biological role, component of the ERMES/MDM complex, which serves as a molecular tether to connect the endoplasmic reticulum (ER) and mitochondria. Components of this complex are involved in the control of mitochondrial shape and protein biogenesis, and function in nonvesicular lipid trafficking between the ER and mitochondria. MDM12 is required for the interaction of the ER-resident membrane protein MMM1 and the outer mitochondrial membrane-resident beta-barrel protein MDM10. The MDM12-MMM1 subcomplex functions in the major beta-barrel assembly pathway that is responsible for biogenesis of all mitochondrial outer membrane beta-barrel proteins, and acts in a late step after the SAM complex. The MDM10-MDM12-MMM1 subcomplex further acts in the TOM40-specific pathway after the action of the MDM12-MMM1 complex. Essential for establishing and maintaining the structure of mitochondria and maintenance of mtDNA nucleoids. This is Mitochondrial distribution and morphology protein 12 from Paracoccidioides lutzii (strain ATCC MYA-826 / Pb01) (Paracoccidioides brasiliensis).